The chain runs to 275 residues: Large ribosomal subunit protein uL2c (275 aa).

2 disordered regions span residues 1 to 30 and 225 to 275; these read MAIH…QKQK and MNPV…RRRK. A compositionally biased stretch (polar residues) spans 21 to 30; the sequence is QAKSTPQKQK.

Belongs to the universal ribosomal protein uL2 family. In terms of assembly, part of the 50S ribosomal subunit.

It localises to the plastid. The protein resides in the chloroplast. The polypeptide is Large ribosomal subunit protein uL2c (rpl2) (Illicium oligandrum (Star anise)).